A 65-amino-acid chain; its full sequence is Large ribosomal subunit protein bL35 (65 aa).

The interval 1–28 (MPKIKTNRGAAKRFRKTGSGKIRRNKAF) is disordered. Positions 10–26 (AAKRFRKTGSGKIRRNK) are enriched in basic residues.

It belongs to the bacterial ribosomal protein bL35 family.

The chain is Large ribosomal subunit protein bL35 from Syntrophotalea carbinolica (strain DSM 2380 / NBRC 103641 / GraBd1) (Pelobacter carbinolicus).